The sequence spans 1062 residues: Cell division control protein 7 (1062 aa).

One can recognise a Protein kinase domain in the interval 9–259 (ITLGDCLGKG…TRKLLKHPWV (251 aa)). ATP-binding positions include 15–23 (LGKGAFGAV) and Lys38. The active-site Proton acceptor is the Asp131. Composition is skewed to polar residues over residues 296 to 310 (NRIN…QSSY) and 376 to 394 (AFNS…SPLS). Disordered regions lie at residues 296–331 (NRIN…NWDN), 361–394 (NNSS…SPLS), and 1038–1062 (NEHK…PLTQ).

This sequence belongs to the protein kinase superfamily. Ser/Thr protein kinase family. CDC7 subfamily. Interacts with spg1. Seems to interact with cdc11. The cofactor is Mg(2+).

The catalysed reaction is L-seryl-[protein] + ATP = O-phospho-L-seryl-[protein] + ADP + H(+). It carries out the reaction L-threonyl-[protein] + ATP = O-phospho-L-threonyl-[protein] + ADP + H(+). Functionally, protein kinase essential for cell division. Plays a key role in initiation of septum formation and cytokinesis. This Schizosaccharomyces pombe (strain 972 / ATCC 24843) (Fission yeast) protein is Cell division control protein 7 (cdc7).